The chain runs to 82 residues: Sec-independent protein translocase protein TatA (82 aa).

The chain crosses the membrane as a helical span at residues 1 to 21 (MGIFDWKHWIVILIVVVLVFG). Residues 43-82 (VNTEEDDKKEQPAAQPAQPLNQPHTIDAQAQKVEEPARKD) form a disordered region.

The protein belongs to the TatA/E family. As to quaternary structure, the Tat system comprises two distinct complexes: a TatABC complex, containing multiple copies of TatA, TatB and TatC subunits, and a separate TatA complex, containing only TatA subunits. Substrates initially bind to the TatABC complex, which probably triggers association of the separate TatA complex to form the active translocon.

It is found in the cell inner membrane. In terms of biological role, part of the twin-arginine translocation (Tat) system that transports large folded proteins containing a characteristic twin-arginine motif in their signal peptide across membranes. TatA could form the protein-conducting channel of the Tat system. In Pseudomonas paraeruginosa (strain DSM 24068 / PA7) (Pseudomonas aeruginosa (strain PA7)), this protein is Sec-independent protein translocase protein TatA.